The sequence spans 157 residues: UPF0303 protein NT01EI_1570 (157 aa).

This sequence belongs to the UPF0303 family.

In Edwardsiella ictaluri (strain 93-146), this protein is UPF0303 protein NT01EI_1570.